The primary structure comprises 379 residues: Cobalt-precorrin-5B C(1)-methyltransferase (379 aa).

The protein belongs to the CbiD family.

The catalysed reaction is Co-precorrin-5B + S-adenosyl-L-methionine = Co-precorrin-6A + S-adenosyl-L-homocysteine. It participates in cofactor biosynthesis; adenosylcobalamin biosynthesis; cob(II)yrinate a,c-diamide from sirohydrochlorin (anaerobic route): step 6/10. Catalyzes the methylation of C-1 in cobalt-precorrin-5B to form cobalt-precorrin-6A. The sequence is that of Cobalt-precorrin-5B C(1)-methyltransferase from Cyanothece sp. (strain PCC 7425 / ATCC 29141).